The sequence spans 315 residues: tRNA dimethylallyltransferase (315 aa).

13-20 serves as a coordination point for ATP; it reads GPTASGKT. 15–20 lines the substrate pocket; it reads TASGKT. 4 interaction with substrate tRNA regions span residues 38–41, 162–166, 243–248, and 276–283; these read DSAL, QRLSR, RCVGYR, and KRQITWLR.

It belongs to the IPP transferase family. In terms of assembly, monomer. It depends on Mg(2+) as a cofactor.

It carries out the reaction adenosine(37) in tRNA + dimethylallyl diphosphate = N(6)-dimethylallyladenosine(37) in tRNA + diphosphate. Functionally, catalyzes the transfer of a dimethylallyl group onto the adenine at position 37 in tRNAs that read codons beginning with uridine, leading to the formation of N6-(dimethylallyl)adenosine (i(6)A). This chain is tRNA dimethylallyltransferase, found in Vibrio cholerae serotype O1 (strain ATCC 39541 / Classical Ogawa 395 / O395).